A 577-amino-acid polypeptide reads, in one-letter code: Sensor protein ChvG (577 aa).

Over 1–29 (MRGQRRWAHPFTLIRRLFGNAVFSSLTRR) the chain is Cytoplasmic. Residues 30-50 (IVFFNLVALVVLVGGIMYLNQ) traverse the membrane as a helical segment. Over 51–260 (FREGLIDARV…DIDKIVHAER (210 aa)) the chain is Periplasmic. Residues 261–281 (LAIIRVFGVAALVNVILSLLL) form a helical membrane-spanning segment. Residues 282 to 577 (SSTIANPLRR…VLSLPAGPHP (296 aa)) lie on the Cytoplasmic side of the membrane. The HAMP domain occupies 283–339 (STIANPLRRLSAAAIRVRRGGAKEREEIPDFSSRQDEIGNLSVALREMTTALYDRIA). A Histidine kinase domain is found at 347–575 (DVSHELKNPL…RFVLSLPAGP (229 aa)). H350 is subject to Phosphohistidine.

In terms of assembly, homodimer.

It localises to the cell inner membrane. The catalysed reaction is ATP + protein L-histidine = ADP + protein N-phospho-L-histidine.. It functions in the pathway glycan metabolism; exopolysaccharide biosynthesis. Functionally, member of a two-component regulatory system ChvG(ExoS)/ChvI involved in regulating the production of succinoglycan. Activates ChvI by phosphorylation. The polypeptide is Sensor protein ChvG (chvG) (Rhizobium meliloti (strain 1021) (Ensifer meliloti)).